Consider the following 275-residue polypeptide: Arylamine N-acetyltransferase (275 aa).

Cysteine 70 acts as the Acyl-thioester intermediate in catalysis. Residues histidine 110 and aspartate 127 contribute to the active site.

The protein belongs to the arylamine N-acetyltransferase family. As to quaternary structure, homodimer and homotetramer.

The catalysed reaction is an arylamine + acetyl-CoA = an N-acetylarylamine + CoA. Functionally, catalyzes the transfer of the acetyl group from acetyl coenzyme A to the free amino group of arylamines and hydrazines. Substrates include isoniazid, anisidine, and 4-aminoveratrole, and to a much lesser extent, p-aminobenzoic acid. In Mycolicibacterium smegmatis (Mycobacterium smegmatis), this protein is Arylamine N-acetyltransferase.